The sequence spans 84 residues: Large ribosomal subunit protein bL27 (84 aa).

The protein belongs to the bacterial ribosomal protein bL27 family.

The sequence is that of Large ribosomal subunit protein bL27 from Campylobacter lari (strain RM2100 / D67 / ATCC BAA-1060).